Consider the following 723-residue polypeptide: Catalase-peroxidase (723 aa).

A cross-link (tryptophyl-tyrosyl-methioninium (Trp-Tyr) (with M-252)) is located at residues 98 to 226 (WHSAGSYRVG…LAAVMMGLIY (129 aa)). H99 serves as the catalytic Proton acceptor. Residues 226–252 (YVNPEGVDGNPDPLKTAKDMRVTFARM) constitute a cross-link (tryptophyl-tyrosyl-methioninium (Tyr-Met) (with W-98)). Heme b is bound at residue H267.

It belongs to the peroxidase family. Peroxidase/catalase subfamily. In terms of assembly, homodimer or homotetramer. It depends on heme b as a cofactor. In terms of processing, formation of the three residue Trp-Tyr-Met cross-link is important for the catalase, but not the peroxidase activity of the enzyme.

It catalyses the reaction H2O2 + AH2 = A + 2 H2O. The enzyme catalyses 2 H2O2 = O2 + 2 H2O. Bifunctional enzyme with both catalase and broad-spectrum peroxidase activity. The sequence is that of Catalase-peroxidase from Vibrio vulnificus (strain CMCP6).